A 337-amino-acid chain; its full sequence is 1-aminocyclopropane-1-carboxylate deaminase (337 aa).

Lysine 50 carries the post-translational modification N6-(pyridoxal phosphate)lysine. Serine 77 (nucleophile) is an active-site residue.

This sequence belongs to the ACC deaminase/D-cysteine desulfhydrase family. Homotrimer. Requires pyridoxal 5'-phosphate as cofactor.

The enzyme catalyses 1-aminocyclopropane-1-carboxylate + H2O = 2-oxobutanoate + NH4(+). Functionally, catalyzes a cyclopropane ring-opening reaction, the irreversible conversion of 1-aminocyclopropane-1-carboxylate (ACC) to ammonia and alpha-ketobutyrate. Allows growth on ACC as a nitrogen source. This chain is 1-aminocyclopropane-1-carboxylate deaminase, found in Rhizobium radiobacter (Agrobacterium tumefaciens).